The chain runs to 267 residues: MIDAEQLRRVSVKVSSETAGLLRDLACSEDLGRVVSGETTVADKRAEDYILDLLRRELGQVQVISEEAGGVASKTSDAPIALVDPLDGSTNYLSCITWCSVSVAFADPRSGEILAGSVAPVYAGMPVSFARGKGCYHGGLKVEDPSIRGSIISVYVDEPGAIESVAGAIGRLKGVRRDFKVRSLGSAALELAYTAIGYIAVFADLRARLRNIDVAAAVGAVRECGGVVTDAHGQPLRIGVWRVERVGSVVASLDEALARIAVGGGSG.

Mg(2+) is bound by residues Glu66, Asp84, Leu86, and Asp87. Glu66 serves as a coordination point for substrate. Residues Leu86–Ser89, Arg182, and Asp213 each bind substrate. Asp213 serves as a coordination point for Mg(2+).

Belongs to the inositol monophosphatase superfamily. Mg(2+) is required as a cofactor.

It carries out the reaction a myo-inositol phosphate + H2O = myo-inositol + phosphate. In Aeropyrum pernix (strain ATCC 700893 / DSM 11879 / JCM 9820 / NBRC 100138 / K1), this protein is Inositol-1-monophosphatase (suhB).